We begin with the raw amino-acid sequence, 493 residues long: Protein LTV1 homolog (493 aa).

3 disordered regions span residues 42–63 (AAAR…QRQE), 97–119 (PNQA…KLML), and 170–207 (IQAM…DENE). The span at 176-207 (GDSDDEEWDDEDGEEQSDMDFDSDDLNEDENE) shows a compositional bias: acidic residues. Ser345, Ser369, Ser370, Ser424, and Ser427 each carry phosphoserine. A disordered region spans residues 359–387 (VIDEPRRSRRSSASTNPAPIQIDPKTGLP). Positions 437 to 468 (KDETHEEKKERKRLLKDYRNERRIEKKANTEA) form a coiled coil. Residues 465 to 474 (NTEAFKEEKK) are compositionally biased toward basic and acidic residues. The tract at residues 465 to 493 (NTEAFKEEKKRQTHVKINQRTNQQGASIV) is disordered. Over residues 479 to 493 (VKINQRTNQQGASIV) the composition is skewed to polar residues.

Belongs to the LTV1 family. As to quaternary structure, interacts with RpS3; the interaction is RNA-independent. Associates with free 40S ribosome subunits.

It localises to the cytoplasm. Necessary for the biogenesis of 40S ribosome subunits by regulating pre-rRNA processing. Non-ribosomal factor required for efficient nuclear export of the ribosomal 40S subunit. Necessary for endoreplication driven by Myc. The protein is Protein LTV1 homolog of Drosophila melanogaster (Fruit fly).